Consider the following 639-residue polypeptide: Threonine--tRNA ligase (639 aa).

Residues 1–61 (MIHITLPDGS…TQDSPLSIVT (61 aa)) enclose the TGS domain. The tract at residues 242-533 (DHRKLGRELD…LIEEHAGALP (292 aa)) is catalytic. The Zn(2+) site is built by Cys-333, His-384, and His-510.

It belongs to the class-II aminoacyl-tRNA synthetase family. Homodimer. Zn(2+) is required as a cofactor.

The protein localises to the cytoplasm. The catalysed reaction is tRNA(Thr) + L-threonine + ATP = L-threonyl-tRNA(Thr) + AMP + diphosphate + H(+). Catalyzes the attachment of threonine to tRNA(Thr) in a two-step reaction: L-threonine is first activated by ATP to form Thr-AMP and then transferred to the acceptor end of tRNA(Thr). Also edits incorrectly charged L-seryl-tRNA(Thr). This is Threonine--tRNA ligase from Acidovorax sp. (strain JS42).